The following is a 148-amino-acid chain: Glutamyl-tRNA(Gln) amidotransferase subunit C, mitochondrial (148 aa).

It belongs to the GatC family. Subunit of the heterotrimeric GatCAB amidotransferase (AdT) complex, composed of A, B and C subunits.

The protein localises to the mitochondrion. It catalyses the reaction L-glutamyl-tRNA(Gln) + L-glutamine + ATP + H2O = L-glutaminyl-tRNA(Gln) + L-glutamate + ADP + phosphate + H(+). In terms of biological role, allows the formation of correctly charged Gln-tRNA(Gln) through the transamidation of misacylated Glu-tRNA(Gln) in the mitochondria. The reaction takes place in the presence of glutamine and ATP through an activated gamma-phospho-Glu-tRNA(Gln). This chain is Glutamyl-tRNA(Gln) amidotransferase subunit C, mitochondrial, found in Drosophila simulans (Fruit fly).